We begin with the raw amino-acid sequence, 349 residues long: N-formyl peptide receptor 3 (349 aa).

Residues 1–27 are Extracellular-facing; that stretch reads METNFSIPLNETEEVLPEPAGHTVLWI. N-linked (GlcNAc...) asparagine glycosylation is found at asparagine 4 and asparagine 10. A helical transmembrane segment spans residues 28 to 50; it reads FSLLVHGVTFIFGVLGNGLVIWV. Residues 51–61 lie on the Cytoplasmic side of the membrane; sequence AGFRMTRTVNT. Residues 62–83 traverse the membrane as a helical segment; it reads ICYLNLALADFSFSAILPFHMV. At 84 to 100 the chain is on the extracellular side; sequence SVAMREKWPFGTFLCKL. Cysteine 98 and cysteine 176 are joined by a disulfide. The chain crosses the membrane as a helical span at residues 101 to 121; that stretch reads VHVMIDINLFVSVYLITIIAL. Over 122-140 the chain is Cytoplasmic; sequence DRCICVLHPAWAQNHRTMS. The helical transmembrane segment at 141 to 162 threads the bilayer; that stretch reads LAKRVMTGLWILTIVLTLPNFI. Over 163 to 205 the chain is Extracellular; that stretch reads FWTTISTTNGDTYCIFNYPFWGDTVVERMNVFITMAKVSLILH. A helical membrane pass occupies residues 206-226; sequence FIIGFSIPMSIITVCYGIIVA. The Cytoplasmic portion of the chain corresponds to 227–242; the sequence is KIHKKRMTKSSRPLHI. A helical membrane pass occupies residues 243-266; the sequence is FTAVVASFFICWFPYELTGILMAV. The Extracellular segment spans residues 267-286; that stretch reads WLKEILLNGKYKIILVLINP. The chain crosses the membrane as a helical span at residues 287 to 306; it reads TSSLAFFNSCLNPSLYVFMG. Residues 307–349 are Cytoplasmic-facing; the sequence is HNFQERLIRSLPTSLERALTEVPDSAQTSNTHTTSASPPEETE. The segment at 327-349 is disordered; the sequence is EVPDSAQTSNTHTTSASPPEETE. The segment covering 331-343 has biased composition (polar residues); the sequence is SAQTSNTHTTSAS.

The protein belongs to the G-protein coupled receptor 1 family.

The protein resides in the cell membrane. Its function is as follows. Low affinity receptor for N-formyl-methionyl peptides, which are powerful neutrophils chemotactic factors. Binding of FMLP to the receptor causes activation of neutrophils. This response is mediated via a G-protein that activates a phosphatidylinositol-calcium second messenger system. The sequence is that of N-formyl peptide receptor 3 (FPR3) from Macaca mulatta (Rhesus macaque).